The following is a 288-amino-acid chain: 4-diphosphocytidyl-2-C-methyl-D-erythritol kinase (288 aa).

Lysine 11 is an active-site residue. Residue 100 to 110 (PTSAGLGSGSS) coordinates ATP. Residue aspartate 140 is part of the active site.

Belongs to the GHMP kinase family. IspE subfamily.

It catalyses the reaction 4-CDP-2-C-methyl-D-erythritol + ATP = 4-CDP-2-C-methyl-D-erythritol 2-phosphate + ADP + H(+). It functions in the pathway isoprenoid biosynthesis; isopentenyl diphosphate biosynthesis via DXP pathway; isopentenyl diphosphate from 1-deoxy-D-xylulose 5-phosphate: step 3/6. Its function is as follows. Catalyzes the phosphorylation of the position 2 hydroxy group of 4-diphosphocytidyl-2C-methyl-D-erythritol. In Wolbachia sp. subsp. Brugia malayi (strain TRS), this protein is 4-diphosphocytidyl-2-C-methyl-D-erythritol kinase.